The chain runs to 572 residues: Probable cysteine--tRNA ligase, mitochondrial (572 aa).

Cys-81 contributes to the Zn(2+) binding site. An L-cysteine-binding site is contributed by Gly-82. Residues 83 to 93 (PTVYDHAHLGH) carry the 'HIGH' region motif. Thr-122 provides a ligand contact to L-cysteine. Residues 127–130 (KIIK) carry the 'KIIK' region motif. Cys-260, His-285, and Glu-289 together coordinate Zn(2+). His-285 is an L-cysteine binding site. Residues 320 to 324 (KMSKS) carry the 'KMSKS' region motif. Lys-323 serves as a coordination point for ATP.

Belongs to the class-I aminoacyl-tRNA synthetase family. It depends on Zn(2+) as a cofactor.

It localises to the mitochondrion. It carries out the reaction tRNA(Cys) + L-cysteine + ATP = L-cysteinyl-tRNA(Cys) + AMP + diphosphate. The enzyme catalyses 2 L-cysteine = S-sulfanyl-L-cysteine + L-alanine. The catalysed reaction is S-sulfanyl-L-cysteine + L-cysteine = S-disulfanyl-L-cysteine + L-alanine. It catalyses the reaction S-sulfanyl-L-cysteine + tRNA(Cys) + ATP = (S)-sulfanyl-L-cysteinyl-tRNA(Cys) + AMP + diphosphate. It carries out the reaction S-disulfanyl-L-cysteine + tRNA(Cys) + ATP = (S)-disulfanyl-L-cysteinyl-tRNA(Cys) + AMP + diphosphate. Mitochondrial cysteine-specific aminoacyl-tRNA synthetase that catalyzes the ATP-dependent ligation of cysteine to tRNA(Cys). Functionally, in addition to its role as an aminoacyl-tRNA synthetase, has also cysteine persulfide synthase activity. Produces reactive persulfide species such as cysteine persulfide (CysSSH) from substrate cysteine and mediate direct incorporation of CysSSH into proteins during translations, resulting in protein persulfides and polysulfides. CysSSHs behave as potent antioxidants and cellular protectants. The polypeptide is Probable cysteine--tRNA ligase, mitochondrial (cars2) (Xenopus tropicalis (Western clawed frog)).